Consider the following 534-residue polypeptide: MTMMNEKLKKEKKKIFGVITPFQKYLYTPRIINTVHLIIMSSKGITKKKVKSLKNLDSTKKLAEKIKQQALQKQQKQQKQQEQENANHNQTESSLSSSSSTTSSSITTIDPDAELKFKTFKELNLVPDLLESIESMKFTKPTPIQSEAIPHALEGKDIIGLAQTGSGKTAAFAIPILQSLWHAQQPYFALVLAPTRELAFQIKDTFDALGSSMGLRSSCIVGGMDMMDQARDLMRKPHVIVATPGRIMDHLEHTKGFSLKNLKYLVMDEADRLLDMDFGPALDKILKVIPIKRTTYLFSATMTNKIEKLQRASLHNPVRVAVSSKYQTADNLVQSMMLVNDGYKNTILIHLLNEFMGKSIIVFTRTVAHAQRTALLARILGFNAVPLHGQLSQSQRLGSLNKFKSNQANILVATDVAARGLDIPSVDVVINYDIPTDSKAYIHRVGRTARAGRSGKSISLITQYDLEMYLRIESVLGKKLPKEDKPPKEVLDALHVHVDKATAEAIRQTKEIHDKRNGGGGRRRNRDDADREER.

The interval 67–107 is disordered; that stretch reads KQQALQKQQKQQKQQEQENANHNQTESSLSSSSSTTSSSIT. 2 stretches are compositionally biased toward low complexity: residues 68–80 and 91–107; these read QQAL…QQKQ and TESS…SSIT. A Q motif motif is present at residues 118 to 146; sequence KTFKELNLVPDLLESIESMKFTKPTPIQS. The region spanning 149–320 is the Helicase ATP-binding domain; it reads IPHALEGKDI…RASLHNPVRV (172 aa). An ATP-binding site is contributed by 162-169; the sequence is AQTGSGKT. The DEAD box signature appears at 268–271; it reads DEAD. In terms of domain architecture, Helicase C-terminal spans 347–492; that stretch reads ILIHLLNEFM…EDKPPKEVLD (146 aa). 2 stretches are compositionally biased toward basic and acidic residues: residues 505–517 and 525–534; these read AIRQ…DKRN and NRDDADREER. The segment at 505-534 is disordered; sequence AIRQTKEIHDKRNGGGGRRRNRDDADREER.

The protein belongs to the DEAD box helicase family. DDX47/RRP3 subfamily. In terms of assembly, interacts with the SSU processome.

The protein resides in the nucleus. It catalyses the reaction ATP + H2O = ADP + phosphate + H(+). Its function is as follows. ATP-dependent rRNA helicase required for pre-ribosomal RNA processing. Involved in the maturation of the 35S-pre-rRNA and to its cleavage to mature 18S rRNA. The polypeptide is ATP-dependent rRNA helicase RRP3 (Candida albicans (strain SC5314 / ATCC MYA-2876) (Yeast)).